The following is a 234-amino-acid chain: uncharacterized protein (234 aa).

Positions 1-23 are disordered; it reads MVDQIRSPSWKSGFPSHQHQQGS.

This is an uncharacterized protein from Caenorhabditis elegans.